Here is a 296-residue protein sequence, read N- to C-terminus: tRNA (guanine(9)-N1)-methyltransferase (296 aa).

Positions methionine 1–lysine 33 are disordered. The region spanning threonine 85–glutamate 274 is the SAM-dependent MTase TRM10-type domain. Residues leucine 181–threonine 182, glycine 201, aspartate 205–histidine 209, cysteine 213, leucine 227, and lysine 239–leucine 241 contribute to the S-adenosyl-L-methionine site. Aspartate 205 serves as the catalytic Proton acceptor. The segment at aspartate 277 to isoleucine 296 is disordered.

Belongs to the class IV-like SAM-binding methyltransferase superfamily. TRM10 family. As to quaternary structure, monomer.

It localises to the cytoplasm. The protein resides in the nucleus. It catalyses the reaction guanosine(9) in tRNA + S-adenosyl-L-methionine = N(1)-methylguanosine(9) in tRNA + S-adenosyl-L-homocysteine + H(+). Its function is as follows. S-adenosyl-L-methionine-dependent guanine N(1)-methyltransferase that catalyzes the formation of N(1)-methylguanine at position 9 (m1G9) in cytoplasmic tRNA. The polypeptide is tRNA (guanine(9)-N1)-methyltransferase (Eremothecium gossypii (strain ATCC 10895 / CBS 109.51 / FGSC 9923 / NRRL Y-1056) (Yeast)).